The sequence spans 243 residues: Segregation and condensation protein A (243 aa).

This sequence belongs to the ScpA family. As to quaternary structure, component of a cohesin-like complex composed of ScpA, ScpB and the Smc homodimer, in which ScpA and ScpB bind to the head domain of Smc. The presence of the three proteins is required for the association of the complex with DNA.

It localises to the cytoplasm. Functionally, participates in chromosomal partition during cell division. May act via the formation of a condensin-like complex containing Smc and ScpB that pull DNA away from mid-cell into both cell halves. This is Segregation and condensation protein A from Staphylococcus epidermidis (strain ATCC 35984 / DSM 28319 / BCRC 17069 / CCUG 31568 / BM 3577 / RP62A).